Reading from the N-terminus, the 336-residue chain is Putative bifunctional cytochrome c-type biogenesis protein CcmAE (336 aa).

A cytochrome c biogenesis ATP-binding export protein CcmA 2 region spans residues 1–199; sequence MLEARDLYCE…ADTVRRLALT (199 aa). In terms of domain architecture, ABC transporter spans 2–242; the sequence is LEARDLYCER…VGQRLRVGGM (241 aa). ATP is bound at residue 34–41; sequence GGNGAGKT. The cytochrome c-type biogenesis protein CcmE 2 stretch occupies residues 196–336; it reads LALTTALVLY…PQRVDKDTSS (141 aa). The heme site is built by His-307 and Tyr-311. The interval 307 to 336 is disordered; the sequence is HDENYTPPEVEKAMQENHRRPQRVDKDTSS.

The protein in the N-terminal section; belongs to the ABC transporter superfamily. CcmA exporter (TC 3.A.1.107) family. This sequence in the C-terminal section; belongs to the CcmE/CycJ family.

The protein resides in the cell inner membrane. It catalyses the reaction heme b(in) + ATP + H2O = heme b(out) + ADP + phosphate + H(+). Its function is as follows. Part of the ABC transporter complex CcmAB involved in the biogenesis of c-type cytochromes; once thought to export heme, this seems not to be the case, but its exact role is uncertain. Responsible for energy coupling to the transport system. In terms of biological role, heme chaperone required for the biogenesis of c-type cytochromes. Transiently binds heme delivered by CcmC and transfers the heme to apo-cytochromes in a process facilitated by CcmF and CcmH. The polypeptide is Putative bifunctional cytochrome c-type biogenesis protein CcmAE (ccmAE) (Salmonella choleraesuis (strain SC-B67)).